Consider the following 380-residue polypeptide: Chorismate synthase (380 aa).

R47 provides a ligand contact to NADP(+). FMN-binding positions include 124–126 (RSS), G288, 303–307 (KPTST), and R329.

It belongs to the chorismate synthase family. As to quaternary structure, homotetramer. FMNH2 is required as a cofactor.

The enzyme catalyses 5-O-(1-carboxyvinyl)-3-phosphoshikimate = chorismate + phosphate. It participates in metabolic intermediate biosynthesis; chorismate biosynthesis; chorismate from D-erythrose 4-phosphate and phosphoenolpyruvate: step 7/7. Its function is as follows. Catalyzes the anti-1,4-elimination of the C-3 phosphate and the C-6 proR hydrogen from 5-enolpyruvylshikimate-3-phosphate (EPSP) to yield chorismate, which is the branch point compound that serves as the starting substrate for the three terminal pathways of aromatic amino acid biosynthesis. This reaction introduces a second double bond into the aromatic ring system. This chain is Chorismate synthase, found in Leptospira interrogans serogroup Icterohaemorrhagiae serovar copenhageni (strain Fiocruz L1-130).